The primary structure comprises 44 residues: Cytochrome b559 subunit beta (44 aa).

The helical transmembrane segment at 19–35 (WLSVHALGVPSVFFLGA) threads the bilayer. Position 23 (His23) interacts with heme.

It belongs to the PsbE/PsbF family. In terms of assembly, heterodimer of an alpha subunit and a beta subunit. PSII is composed of 1 copy each of membrane proteins PsbA, PsbB, PsbC, PsbD, PsbE, PsbF, PsbH, PsbI, PsbJ, PsbK, PsbL, PsbM, PsbT, PsbX, PsbY, PsbZ, Psb30/Ycf12, peripheral proteins PsbO, CyanoQ (PsbQ), PsbU, PsbV and a large number of cofactors. It forms dimeric complexes. It depends on heme b as a cofactor.

The protein localises to the cellular thylakoid membrane. This b-type cytochrome is tightly associated with the reaction center of photosystem II (PSII). PSII is a light-driven water:plastoquinone oxidoreductase that uses light energy to abstract electrons from H(2)O, generating O(2) and a proton gradient subsequently used for ATP formation. It consists of a core antenna complex that captures photons, and an electron transfer chain that converts photonic excitation into a charge separation. The sequence is that of Cytochrome b559 subunit beta from Synechococcus elongatus (strain ATCC 33912 / PCC 7942 / FACHB-805) (Anacystis nidulans R2).